Here is a 602-residue protein sequence, read N- to C-terminus: Elongation factor 4 (602 aa).

The region spanning 7-190 is the tr-type G domain; the sequence is KHIRNFCIVA…AVVQKVPAPS (184 aa). Residues 19-24 and 137-140 contribute to the GTP site; these read DHGKST and NKID.

This sequence belongs to the TRAFAC class translation factor GTPase superfamily. Classic translation factor GTPase family. LepA subfamily.

The protein resides in the cell membrane. The catalysed reaction is GTP + H2O = GDP + phosphate + H(+). In terms of biological role, required for accurate and efficient protein synthesis under certain stress conditions. May act as a fidelity factor of the translation reaction, by catalyzing a one-codon backward translocation of tRNAs on improperly translocated ribosomes. Back-translocation proceeds from a post-translocation (POST) complex to a pre-translocation (PRE) complex, thus giving elongation factor G a second chance to translocate the tRNAs correctly. Binds to ribosomes in a GTP-dependent manner. This Clostridium acetobutylicum (strain ATCC 824 / DSM 792 / JCM 1419 / IAM 19013 / LMG 5710 / NBRC 13948 / NRRL B-527 / VKM B-1787 / 2291 / W) protein is Elongation factor 4.